The chain runs to 460 residues: MATGKIVQVIGAVVDVEFPQDAVPRVYDALEVQNGNERLVLEVQQQLGGGIVRTIAMGSSDGLRRGLDVKDLEHPIEVPVGKATLGRIMNVLGEPVDMKGEIGEEERWAIHRAAPSYEELSNSQELLETGIKVIDLMCPFAKGGKVGLFGGAGVGKTVNMMELIRNIAIEHSGYSVFAGVGERTREGNDFYHEMTDSNVIDKVSLVYGQMNEPPGNRLRVALTGLTMAEKFRDEGRDVLLFVDNIYRYTLAGTEVSALLGRMPSAVGYQPTLAEEMGVLQERITSTKTGSITSVQAVYVPADDLTDPSPATTFAHLDATVVLSRQIASLGIYPAVDPLDSTSRQLDPLVVGQEHYDTARGVQSILQRYQELKDIIAILGMDELSEEDKLVVARARKIQRFLSQPFFVAEVFTGSPGKYVSLKDTIRGFKGIMEGEYDHLPEQAFYMVGSIEEAVEKAKKL.

Position 150 to 157 (150 to 157 (GGAGVGKT)) interacts with ATP.

This sequence belongs to the ATPase alpha/beta chains family. In terms of assembly, F-type ATPases have 2 components, CF(1) - the catalytic core - and CF(0) - the membrane proton channel. CF(1) has five subunits: alpha(3), beta(3), gamma(1), delta(1), epsilon(1). CF(0) has three main subunits: a(1), b(2) and c(9-12). The alpha and beta chains form an alternating ring which encloses part of the gamma chain. CF(1) is attached to CF(0) by a central stalk formed by the gamma and epsilon chains, while a peripheral stalk is formed by the delta and b chains.

The protein resides in the cell inner membrane. It catalyses the reaction ATP + H2O + 4 H(+)(in) = ADP + phosphate + 5 H(+)(out). Its function is as follows. Produces ATP from ADP in the presence of a proton gradient across the membrane. The catalytic sites are hosted primarily by the beta subunits. This Escherichia coli (strain SMS-3-5 / SECEC) protein is ATP synthase subunit beta.